We begin with the raw amino-acid sequence, 240 residues long: Ribonuclease PH (240 aa).

Residues Arg86 and 124–126 contribute to the phosphate site; that span reads GTR.

The protein belongs to the RNase PH family. In terms of assembly, homohexameric ring arranged as a trimer of dimers.

It catalyses the reaction tRNA(n+1) + phosphate = tRNA(n) + a ribonucleoside 5'-diphosphate. In terms of biological role, phosphorolytic 3'-5' exoribonuclease that plays an important role in tRNA 3'-end maturation. Removes nucleotide residues following the 3'-CCA terminus of tRNAs; can also add nucleotides to the ends of RNA molecules by using nucleoside diphosphates as substrates, but this may not be physiologically important. Probably plays a role in initiation of 16S rRNA degradation (leading to ribosome degradation) during starvation. This is Ribonuclease PH from Rhodospirillum rubrum (strain ATCC 11170 / ATH 1.1.1 / DSM 467 / LMG 4362 / NCIMB 8255 / S1).